The sequence spans 345 residues: Biotin synthase (345 aa).

Residues 38–256 enclose the Radical SAM core domain; the sequence is RQVQVSTLLS…IAVARIMMPS (219 aa). 3 residues coordinate [4Fe-4S] cluster: Cys-53, Cys-57, and Cys-60. 4 residues coordinate [2Fe-2S] cluster: Cys-97, Cys-128, Cys-188, and Arg-260.

This sequence belongs to the radical SAM superfamily. Biotin synthase family. Homodimer. It depends on [4Fe-4S] cluster as a cofactor. The cofactor is [2Fe-2S] cluster.

It catalyses the reaction (4R,5S)-dethiobiotin + (sulfur carrier)-SH + 2 reduced [2Fe-2S]-[ferredoxin] + 2 S-adenosyl-L-methionine = (sulfur carrier)-H + biotin + 2 5'-deoxyadenosine + 2 L-methionine + 2 oxidized [2Fe-2S]-[ferredoxin]. It functions in the pathway cofactor biosynthesis; biotin biosynthesis; biotin from 7,8-diaminononanoate: step 2/2. Catalyzes the conversion of dethiobiotin (DTB) to biotin by the insertion of a sulfur atom into dethiobiotin via a radical-based mechanism. The chain is Biotin synthase from Yersinia pestis bv. Antiqua (strain Antiqua).